The sequence spans 544 residues: Putative pentatricopeptide repeat-containing protein At5g59200, chloroplastic (544 aa).

Residues Met1–Ser21 form a disordered region. The transit peptide at Met1 to Arg25 directs the protein to the chloroplast. PPR repeat units follow at residues Asp60–Pro90, Asn91–Pro125, Asn127–Ser156, Ser157–Arg187, Asp188–Lys218, Asp219–Ala253, Asn254–Leu288, Ser289–Lys319, Asp320–Pro354, Asn355–Val385, and Gln391–Glu421. Residues Met426–Asp501 form a type E motif region. The tract at residues Asn502 to Arg532 is type E(+) motif.

The protein belongs to the PPR family. PCMP-E subfamily.

The protein resides in the plastid. The protein localises to the chloroplast. Functionally, involved in RNA editing event in chloroplasts. Required for the editing of a single site in rpl23 transcript. This is Putative pentatricopeptide repeat-containing protein At5g59200, chloroplastic (PCMP-E41) from Arabidopsis thaliana (Mouse-ear cress).